Reading from the N-terminus, the 367-residue chain is Dihydroorotate dehydrogenase (quinone) (367 aa).

Residues 61–65 and T85 contribute to the FMN site; that span reads AGFDK. K65 provides a ligand contact to substrate. 110–114 lines the substrate pocket; it reads NRMGF. Residues N138 and N169 each coordinate FMN. A substrate-binding site is contributed by N169. The active-site Nucleophile is the S172. A substrate-binding site is contributed by N174. The FMN site is built by K212 and T240. Position 241–242 (241–242) interacts with substrate; it reads NT. FMN-binding positions include G263, G292, and 313–314; that span reads YS.

It belongs to the dihydroorotate dehydrogenase family. Type 2 subfamily. As to quaternary structure, monomer. The cofactor is FMN.

Its subcellular location is the cell membrane. The catalysed reaction is (S)-dihydroorotate + a quinone = orotate + a quinol. The protein operates within pyrimidine metabolism; UMP biosynthesis via de novo pathway; orotate from (S)-dihydroorotate (quinone route): step 1/1. In terms of biological role, catalyzes the conversion of dihydroorotate to orotate with quinone as electron acceptor. This Rhodospirillum rubrum (strain ATCC 11170 / ATH 1.1.1 / DSM 467 / LMG 4362 / NCIMB 8255 / S1) protein is Dihydroorotate dehydrogenase (quinone).